The sequence spans 196 residues: DnaA initiator-associating protein DiaA (196 aa).

Residues 34 to 196 (LVHSLLNGNK…DNTLFPHQDD (163 aa)) form the SIS domain.

Belongs to the SIS family. DiaA subfamily. As to quaternary structure, homotetramer; dimer of dimers.

Functionally, required for the timely initiation of chromosomal replication via direct interactions with the DnaA initiator protein. This Salmonella enteritidis PT4 (strain P125109) protein is DnaA initiator-associating protein DiaA.